A 157-amino-acid polypeptide reads, in one-letter code: Protein EOLA1 (157 aa).

One can recognise an ASCH domain in the interval 6 to 92; the sequence is LSFRQPYAGL…IAGLIDIGET (87 aa).

It belongs to the EOLA family. In terms of assembly, interacts with MT2A.

May play a role in cell protection during the inflammatory response. In epithelial cells, negatively regulates IL6 production and apoptosis through the regulation of MT2A expression. This Mus musculus (Mouse) protein is Protein EOLA1.